Consider the following 138-residue polypeptide: Small ribosomal subunit protein uS11c (138 aa).

Residues 1–22 (MAKSIPRISSRRNGRIGSGNNV) form a disordered region.

This sequence belongs to the universal ribosomal protein uS11 family. In terms of assembly, part of the 30S ribosomal subunit.

It is found in the plastid. This chain is Small ribosomal subunit protein uS11c, found in Cuscuta reflexa (Southern Asian dodder).